The following is a 453-amino-acid chain: G-protein coupled receptor 39 (453 aa).

Topologically, residues 1 to 34 (MASPSLPGSDCSQIIDHSHVPEFEVATWIKITLI) are extracellular. Cystine bridges form between Cys-11-Cys-191 and Cys-108-Cys-210. Zn(2+) contacts are provided by His-17 and His-19. A helical membrane pass occupies residues 35 to 55 (LVYLIIFVMGLLGNSATIRVT). Residues 56 to 69 (QVLQKKGYLQKEVT) lie on the Cytoplasmic side of the membrane. The chain crosses the membrane as a helical span at residues 70–89 (DHMVSLACSDILVFLIGMPM). Residues 90-109 (EFYSIIWNPLTTSSYTLSCK) are Extracellular-facing. A helical transmembrane segment spans residues 110 to 131 (LHTFLFEACSYATLLHVLTLSF). The Cytoplasmic segment spans residues 132-151 (ERYIAICHPFRYKAVSGPCQ). Residues 152–172 (VKLLIGFVWVTSALVALPLLF) traverse the membrane as a helical segment. Residues 173 to 217 (AMGTEYPLVNVPSHRGLTCNRSSTRHHEQPETSNMSICTNLSSRW) lie on the Extracellular side of the membrane. Asn-192, Asn-206, and Asn-212 each carry an N-linked (GlcNAc...) asparagine glycan. A helical membrane pass occupies residues 218-242 (TVFQSSIFGAFVVYLVVLLSVAFMC). At 243–283 (WNMMQVLMKSQKGSLAGGTRPPQLRKSESEESRTARRQTII) the chain is on the cytoplasmic side. A disordered region spans residues 255–274 (GSLAGGTRPPQLRKSESEES). A helical membrane pass occupies residues 284 to 305 (FLRLIVVTLAVCWMPNQIRRIM). The Extracellular portion of the chain corresponds to 306–323 (AAAKPKHDWTRSYFRAYM). A helical membrane pass occupies residues 324-344 (ILLPFSETFFYLSSVINPLLY). The Cytoplasmic portion of the chain corresponds to 345-453 (TVSSQQFRRV…AENGFQEHEV (109 aa)). Ser-396 is modified (phosphoserine). The segment at 415–453 (SEAEPQSKSQSLSLESLEPNSGAKPANSAAENGFQEHEV) is disordered. The segment covering 418 to 435 (EPQSKSQSLSLESLEPNS) has biased composition (low complexity).

This sequence belongs to the G-protein coupled receptor 1 family. In terms of assembly, interacts with HTR1A. Interacts with GALR1. As to expression, expressed in many tissues, including the stomach, intestine and hypothalamus.

It is found in the cell membrane. Zinc-sensing receptor that can sense changes in extracellular Zn(2+), mediate Zn(2+) signal transmission, and participates in the regulation of numerous physiological processes including glucose homeostasis regulation, gastrointestinal mobility, hormone secretion and cell death. Activation by Zn(2+) in keratinocytes increases the intracellular concentration of Ca(2+) and activates the ERK/MAPK and PI3K/AKT signaling pathways leading to epithelial repair. Plays an essential role in normal wound healing by inducing the production of cytokines including the major inflammatory cytokine IL6 via the PKC/MAPK/CEBPB pathway. Regulates adipose tissue metabolism, especially lipolysis, and regulates the function of lipases, such as hormone-sensitive lipase and adipose triglyceride lipase. Plays a role in the inhibition of cell death and protects against oxidative, endoplasmic reticulum and mitochondrial stress by inducing secretion of the cytoprotective pigment epithelium-derived growth factor (PEDF) and probably other protective transcripts in a GNA13/RHOA/SRE-dependent manner. Forms dynamic heteroreceptor complexes with HTR1A and GALR1 depending on cell type or specific physiological states, resulting in signaling diversity: HTR1A-GPR39 shows additive increase in signaling along the serum response element (SRE) and NF-kappa-B pathways while GALR1 acts as an antagonist blocking SRE. This Homo sapiens (Human) protein is G-protein coupled receptor 39 (GPR39).